A 488-amino-acid chain; its full sequence is Cobyric acid synthase (488 aa).

Residues 248-435 (VLKVVVPVLP…LHGLFESPAA (188 aa)) enclose the GATase cobBQ-type domain. Cysteine 329 acts as the Nucleophile in catalysis. Histidine 427 is an active-site residue.

The protein belongs to the CobB/CobQ family. CobQ subfamily.

Its pathway is cofactor biosynthesis; adenosylcobalamin biosynthesis. In terms of biological role, catalyzes amidations at positions B, D, E, and G on adenosylcobyrinic A,C-diamide. NH(2) groups are provided by glutamine, and one molecule of ATP is hydrogenolyzed for each amidation. The chain is Cobyric acid synthase from Pseudomonas fluorescens (strain Pf0-1).